A 273-amino-acid chain; its full sequence is Salivary glue protein Sgs-3 (273 aa).

Residues 1 to 23 (MKLTIAISLASILLLSVAHVAQG) form the signal peptide. Over residues 47 to 57 (TTTTTTTTCAP) the composition is skewed to low complexity. A disordered region spans residues 47–225 (TTTTTTTTCA…TPKPTNKPGC (179 aa)). The segment covering 58 to 67 (PTRPPPPPCT) has biased composition (pro residues). A compositionally biased stretch (low complexity) spans 83 to 225 (RRTTTTTRQT…TPKPTNKPGC (143 aa)).

The chain is Salivary glue protein Sgs-3 (Sgs3) from Drosophila yakuba (Fruit fly).